Consider the following 373-residue polypeptide: tRNA (guanine(26)-N(2))-dimethyltransferase (373 aa).

The region spanning Lys2–Ile365 is the Trm1 methyltransferase domain. S-adenosyl-L-methionine is bound by residues Arg35, Arg66, Asp86, Asp113, and Ala114.

Belongs to the class I-like SAM-binding methyltransferase superfamily. Trm1 family.

The enzyme catalyses guanosine(26) in tRNA + 2 S-adenosyl-L-methionine = N(2)-dimethylguanosine(26) in tRNA + 2 S-adenosyl-L-homocysteine + 2 H(+). Dimethylates a single guanine residue at position 26 of a number of tRNAs using S-adenosyl-L-methionine as donor of the methyl groups. The protein is tRNA (guanine(26)-N(2))-dimethyltransferase of Methanococcus maripaludis (strain C5 / ATCC BAA-1333).